The following is a 1006-amino-acid chain: uncharacterized protein (1006 aa).

Positions 326–371 (EMEKKRPRSPELVPKKIVMEKERPSSPDSEAEEREHNLRIEKERHQ) are disordered. Composition is skewed to basic and acidic residues over residues 338–350 (VPKKIVMEKERPS) and 358–371 (EREHNLRIEKERHQ). Coiled-coil stretches lie at residues 358 to 473 (EREH…ARLA) and 756 to 782 (EVQKQRAVDSLNSQYEKERNELDAFGR).

This is an uncharacterized protein from Caenorhabditis elegans.